The sequence spans 227 residues: Fibrillarin-like rRNA/tRNA 2'-O-methyltransferase (227 aa).

Residues 86–87, 105–106, 130–131, and 150–153 each bind S-adenosyl-L-methionine; these read TT, EF, DA, and DVAQ.

This sequence belongs to the methyltransferase superfamily. Fibrillarin family. As to quaternary structure, interacts with nop5. Component of box C/D small ribonucleoprotein (sRNP) particles that contain rpl7ae, FlpA and nop5, plus a guide RNA. These sRNP particles form homodimers, giving rise to an asymmetric holoenzyme.

Its function is as follows. Involved in pre-rRNA and tRNA processing. Utilizes the methyl donor S-adenosyl-L-methionine to catalyze the site-specific 2'-hydroxyl methylation of ribose moieties in rRNA and tRNA. Site specificity is provided by a guide RNA that base pairs with the substrate. Methylation occurs at a characteristic distance from the sequence involved in base pairing with the guide RNA. The polypeptide is Fibrillarin-like rRNA/tRNA 2'-O-methyltransferase (Pyrococcus furiosus (strain ATCC 43587 / DSM 3638 / JCM 8422 / Vc1)).